Consider the following 84-residue polypeptide: Delta-thalatoxin-Cad1a (84 aa).

The first 19 residues, 1 to 19 (MAYLKIVLVALMLVLAVSA), serve as a signal peptide directing secretion. The propeptide occupies 20-33 (MRRPDQQDQDISVA). 3 cysteine pairs are disulfide-bonded: Cys-38-Cys-78, Cys-40-Cys-68, and Cys-61-Cys-79.

Belongs to the sea anemone sodium channel inhibitory toxin family. Type II subfamily.

The protein resides in the secreted. The protein localises to the nematocyst. Its function is as follows. Binds specifically to the voltage-gated sodium channel (Nav) and delays its inactivation. The sequence is that of Delta-thalatoxin-Cad1a from Cryptodendrum adhaesivum (Adhesive sea anemone).